The primary structure comprises 445 residues: Chromosomal replication initiator protein DnaA (445 aa).

Residues 1 to 71 (MEEVWLQAQS…SVQSLTDSQT (71 aa)) are domain I, interacts with DnaA modulators. The interval 71–108 (TKIELLIAKPKTEKPKQPAASEVTAAEPEACSGPDHST) is domain II. A disordered region spans residues 83–106 (EKPKQPAASEVTAAEPEACSGPDH). Residues 109–325 (NLNPKYTFDT…GMLIRLGAVS (217 aa)) form a domain III, AAA+ region region. ATP is bound by residues glycine 153, glycine 155, lysine 156, and threonine 157. The interval 326-445 (SLTGKNITLD…VDTLRKGLLS (120 aa)) is domain IV, binds dsDNA.

This sequence belongs to the DnaA family. As to quaternary structure, oligomerizes as a right-handed, spiral filament on DNA at oriC.

It is found in the cytoplasm. Plays an essential role in the initiation and regulation of chromosomal replication. ATP-DnaA binds to the origin of replication (oriC) to initiate formation of the DNA replication initiation complex once per cell cycle. Binds the DnaA box (a 9 base pair repeat at the origin) and separates the double-stranded (ds)DNA. Forms a right-handed helical filament on oriC DNA; dsDNA binds to the exterior of the filament while single-stranded (ss)DNA is stabiized in the filament's interior. The ATP-DnaA-oriC complex binds and stabilizes one strand of the AT-rich DNA unwinding element (DUE), permitting loading of DNA polymerase. After initiation quickly degrades to an ADP-DnaA complex that is not apt for DNA replication. Binds acidic phospholipids. This Geobacter sulfurreducens (strain ATCC 51573 / DSM 12127 / PCA) protein is Chromosomal replication initiator protein DnaA.